The primary structure comprises 96 residues: Protein Vpr (96 aa).

Residues 1–42 form a homooligomerization region; sequence MEQAPEDQGPQREPHNEWTLELLEELKNEAVRHFPRIWLHGL. Ser79, Ser94, and Ser96 each carry phosphoserine; by host.

It belongs to the HIV-1 VPR protein family. Homooligomer, may form homodimer. Interacts with p6-gag region of the Pr55 Gag precursor protein through a (Leu-X-X)4 motif near the C-terminus of the P6gag protein. Interacts with host UNG. May interact with host RAD23A/HHR23A. Interacts with host VPRBP/DCAF1, leading to hijack the CUL4A-RBX1-DDB1-DCAF1/VPRBP complex, mediating ubiquitination of host proteins such as TERT and ZGPAT and arrest of the cell cycle in G2 phase. In terms of processing, phosphorylated on several residues by host. These phosphorylations regulate VPR activity for the nuclear import of the HIV-1 pre-integration complex.

It localises to the virion. It is found in the host nucleus. The protein localises to the host extracellular space. Its function is as follows. During virus entry, plays a role in the transport of the viral pre-integration (PIC) complex to the host nucleus. This function is crucial for viral infection of non-dividing macrophages. May act directly at the nuclear pore complex, by binding nucleoporins phenylalanine-glycine (FG)-repeat regions. Functionally, during virus replication, may deplete host UNG protein, and incude G2-M cell cycle arrest. Acts by targeting specific host proteins for degradation by the 26S proteasome, through association with the cellular CUL4A-DDB1 E3 ligase complex by direct interaction with host VPRPB/DCAF-1. Cell cycle arrest reportedly occurs within hours of infection and is not blocked by antiviral agents, suggesting that it is initiated by the VPR carried into the virion. Additionally, VPR induces apoptosis in a cell cycle dependent manner suggesting that these two effects are mechanistically linked. Detected in the serum and cerebrospinal fluid of AIDS patient, VPR may also induce cell death to bystander cells. This Homo sapiens (Human) protein is Protein Vpr.